Reading from the N-terminus, the 467-residue chain is MEPGTNSFRVEFPDFSSTILQKLNQQRQQGQLCDVSIVVQGHIFRAHKAVLAASSPYFCDQVLLKNSRRIVLPDVMNPRVFENILLSSYTGRLVMPAPEIVSYLTAASFLQMWHVVDKCTEVLEGNPTVLCQKLNHGSDHQSPSSSSYNGLVESFELGSGGHTDFPKAQELRDGENEEESTKDELSSQLTEHEYLPSNSSTEHDRLSTEMASQDGEEGASDSAEFHYTRPMYSKPSIMAHKRWIHVKPERLEQACEGMDVHATYDEHQVTESINTVQTEHTVQPSGVEEDFHIGEKKVEAEFDEQADESNYDEQVDFYGSSMEEFSGERSDGNLIGHRQEAALAAGYSENIEMVTGIKEEASHLGFSATDKLYPCQCGKSFTHKSQRDRHMSMHLGLRPYGCGVCGKKFKMKHHLVGHMKIHTGIKPYECNICAKRFMWRDSFHRHVTSCTKSYEAAKAEQNTTEAN.

An N-acetylmethionine modification is found at methionine 1. The BTB domain maps to 33–97 (CDVSIVVQGH…SYTGRLVMPA (65 aa)). Disordered regions lie at residues 134–153 (LNHG…GLVE) and 162–225 (HTDF…SAEF). 2 stretches are compositionally biased toward basic and acidic residues: residues 164–174 (DFPKAQELRDG) and 182–194 (KDEL…EHEY). Glycyl lysine isopeptide (Lys-Gly) (interchain with G-Cter in SUMO2) cross-links involve residues lysine 182, lysine 241, lysine 247, lysine 297, and lysine 358. The C2H2-type 1; atypical zinc finger occupies 373–394 (YPCQCGKSFTHKSQRDRHMSMH). Residues 400–422 (YGCGVCGKKFKMKHHLVGHMKIH) form a C2H2-type 2 zinc finger. Position 423 is a phosphothreonine (threonine 423). The C2H2-type 3; atypical zinc-finger motif lies at 428 to 450 (YECNICAKRFMWRDSFHRHVTSC). A Glycyl lysine isopeptide (Lys-Gly) (interchain with G-Cter in SUMO2) cross-link involves residue lysine 458.

It belongs to the krueppel C2H2-type zinc-finger protein family. In terms of assembly, interacts with BDP1.

It localises to the nucleus. In terms of biological role, may be involved in transcriptional regulation. In Homo sapiens (Human), this protein is Zinc finger and BTB domain-containing protein 43 (ZBTB43).